Here is a 131-residue protein sequence, read N- to C-terminus: uncharacterized protein (131 aa).

2 helical membrane passes run 68–88 (VVRATPIIGPYAGLPVIVAPI) and 94–114 (VLGAIGVVDITAGIFEDIVAI).

The protein localises to the cell membrane. This is an uncharacterized protein from Methanocaldococcus jannaschii (strain ATCC 43067 / DSM 2661 / JAL-1 / JCM 10045 / NBRC 100440) (Methanococcus jannaschii).